Reading from the N-terminus, the 461-residue chain is Flavin-containing monooxygenase FMO GS-OX4 (461 aa).

17-22 (GAGAAG) is a binding site for FAD. An NADP(+)-binding site is contributed by 211 to 216 (GNFASG).

It belongs to the FMO family.

The enzyme catalyses a (Z)-omega-(methylsulfanyl)-N-sulfo-alkylhydroximate S-glucoside + NADPH + O2 + H(+) = a (Z)-omega-(methylsulfinyl)-alkyl-glucosinolate + NADP(+) + H2O. In terms of biological role, catalyzes the conversion of methylthioalkyl glucosinolates of any chain length into methylsulfinylalkyl glucosinolates. The chain is Flavin-containing monooxygenase FMO GS-OX4 (FMOGS-OX4) from Arabidopsis thaliana (Mouse-ear cress).